A 485-amino-acid polypeptide reads, in one-letter code: Glucose-6-phosphate 1-dehydrogenase (485 aa).

NADP(+)-binding positions include Arg-46, 89–90 (DI), and Lys-144. Residues His-174, Lys-178, Glu-212, and Asp-231 each coordinate substrate. Catalysis depends on His-236, which acts as the Proton acceptor. Lys-334 lines the substrate pocket.

Belongs to the glucose-6-phosphate dehydrogenase family.

The enzyme catalyses D-glucose 6-phosphate + NADP(+) = 6-phospho-D-glucono-1,5-lactone + NADPH + H(+). Its pathway is carbohydrate degradation; pentose phosphate pathway; D-ribulose 5-phosphate from D-glucose 6-phosphate (oxidative stage): step 1/3. Its function is as follows. Catalyzes the oxidation of glucose 6-phosphate to 6-phosphogluconolactone. The chain is Glucose-6-phosphate 1-dehydrogenase from Zymomonas mobilis subsp. mobilis (strain ATCC 31821 / ZM4 / CP4).